The primary structure comprises 1285 residues: ABC-type transporter fsqE (1285 aa).

Residues 54-343 (VSSICAVLAG…IAPSAQALLS (290 aa)) form the ABC transmembrane type-1 1 domain. 6 helical membrane passes run 57–77 (ICAV…GLLV), 102–122 (LYYV…TVGF), 176–196 (LAVM…AFIM), 203–223 (IISP…AYMV), 281–301 (VAGM…LAFW), and 312–332 (MSVA…FAII). The ABC transporter 1 domain maps to 380 to 622 (LDRVGLIYPS…NGAYAALVQK (243 aa)). ATP is bound at residue 413 to 420 (GSSGSGKS). N-linked (GlcNAc...) asparagine glycosylation occurs at asparagine 467. The interval 627–654 (DTHDHKAPDGARLSIEDDDDEDSRYGGN) is disordered. 6 helical membrane-spanning segments follow: residues 707–727 (LFGL…SVFF), 753–773 (GLYV…EIAL), 831–851 (GILT…AIGW), 855–875 (LVCT…LQVL), 931–951 (ILLA…CAAL), and 968–988 (FQVY…GSIF). One can recognise an ABC transmembrane type-1 2 domain in the interval 713–996 (AILAGLTIPV…IFTYAPDASK (284 aa)). N-linked (GlcNAc...) asparagine glycosylation is present at asparagine 1037. In terms of domain architecture, ABC transporter 2 spans 1043–1281 (VEFEHVSFTY…RGKYWEMVSM (239 aa)). Residue 1078-1085 (GQSGSGKS) coordinates ATP. Residue asparagine 1138 is glycosylated (N-linked (GlcNAc...) asparagine).

This sequence belongs to the ABC transporter superfamily. ABCB family. Multidrug resistance exporter (TC 3.A.1.201) subfamily.

The protein localises to the membrane. Its pathway is secondary metabolite biosynthesis. In terms of biological role, ABC-type transporter; part of the gene cluster that mediates the biosynthesis of the isoquinoline alkaloids fumisoquin A, fumisoquin B and fumisoquin C; as well as small amounts of fumipyrrole as a shunt metabolite. The products of the cluster lead to a brown coloration and are important for growth and conidiation. FsqE possibly plays a role of self-protection. The polypeptide is ABC-type transporter fsqE (Aspergillus fumigatus (strain ATCC MYA-4609 / CBS 101355 / FGSC A1100 / Af293) (Neosartorya fumigata)).